Here is a 420-residue protein sequence, read N- to C-terminus: Protein disulfide isomerase Creld1 (420 aa).

The first 29 residues, M1–L29, serve as a signal peptide directing secretion. The Extracellular portion of the chain corresponds to Q30–E362. Residues C46–C49 carry the CXXC motif. Intrachain disulfides connect C46-C49, C155-C169, C163-C181, and C183-C192. Residues L153–G193 form the EGF-like 1 domain. Residue N205 is glycosylated (N-linked (GlcNAc...) asparagine). FU repeat units lie at residues H208 to T255 and S268 to P315. The CXXC motif lies at C278–C281. 4 disulfides stabilise this stretch: C278-C281, C309-C321, C314-C330, and C332-C343. Residues D305 to I342 form the EGF-like 2; calcium-binding domain. The helical transmembrane segment at M363–A383 threads the bilayer. Residue K384 is a topological domain, cytoplasmic. The chain crosses the membrane as a helical span at residues G385–L405. Residues S406–R420 are Extracellular-facing.

Belongs to the CRELD family. Expressed in myoblast C2C12 cells (at protein level).

The protein localises to the membrane. It catalyses the reaction Catalyzes the rearrangement of -S-S- bonds in proteins.. Protein disulfide isomerase. Promotes the localization of acetylcholine receptors (AChRs) to the plasma membrane. This is Protein disulfide isomerase Creld1 (Creld1) from Mus musculus (Mouse).